The primary structure comprises 983 residues: UPF0746 protein DDB_G0280809 (983 aa).

The segment covering 1-21 (MISNKRKEIDTINEHHEKNND) has biased composition (basic and acidic residues). The segment at 1-26 (MISNKRKEIDTINEHHEKNNDDSDGI) is disordered. One can recognise an SAP domain in the interval 42–76 (SGSTNYRELQIIAKSLGLASNGKKQLVYNRIEGYF). Residues 391–413 (HTTPTSTSTSTSTSTSTYTSTST) are disordered. A compositionally biased stretch (low complexity) spans 392-413 (TTPTSTSTSTSTSTSTYTSTST).

Belongs to the UPF0746 family.

This Dictyostelium discoideum (Social amoeba) protein is UPF0746 protein DDB_G0280809.